Consider the following 314-residue polypeptide: Serine protease 46 (314 aa).

The Peptidase S1 domain maps to 44–281 (VVNGKVVEVG…FTQWIKRQIG (238 aa)). The cysteines at positions 69 and 85 are disulfide-linked. Residues H84 and D130 each act as charge relay system in the active site. Disulfide bonds link C164–C239, C197–C219, and C229–C257. S233 (charge relay system) is an active-site residue. The helical transmembrane segment at 293–313 (FLSPFILTGYILLVSLGSLWL) threads the bilayer.

This sequence belongs to the peptidase S1 family.

Its subcellular location is the membrane. This is Serine protease 46 (Prss46) from Rattus norvegicus (Rat).